We begin with the raw amino-acid sequence, 94 residues long: Acylphosphatase (94 aa).

The 88-residue stretch at 7-94 (AALVRITGRV…EAPAGFRITR (88 aa)) folds into the Acylphosphatase-like domain. Residues Arg22 and Asn40 contribute to the active site.

The protein belongs to the acylphosphatase family.

The catalysed reaction is an acyl phosphate + H2O = a carboxylate + phosphate + H(+). The protein is Acylphosphatase (acyP) of Sinorhizobium medicae (strain WSM419) (Ensifer medicae).